The chain runs to 413 residues: GDP-mannose-dependent alpha-mannosyltransferase (413 aa).

This sequence belongs to the glycosyltransferase group 1 family.

It functions in the pathway phospholipid metabolism; phosphatidylinositol metabolism. Functionally, catalyzes the addition of a mannose residue from GDP-D-mannose to GlcAGroAc2 to generate 1,2-di-O-C16/C18:1-(alpha-D-mannopyranosyl)-(1-4)-(alpha-D-glucopyranosyluronic acid)-(1-3)-glycerol(ManGlcAGroAc2). The protein is GDP-mannose-dependent alpha-mannosyltransferase (mgtA) of Corynebacterium glutamicum (strain ATCC 13032 / DSM 20300 / JCM 1318 / BCRC 11384 / CCUG 27702 / LMG 3730 / NBRC 12168 / NCIMB 10025 / NRRL B-2784 / 534).